The following is a 265-amino-acid chain: Protein IL-40 (265 aa).

The first 20 residues, Met1–Ala20, serve as a signal peptide directing secretion. Residues Asn86 and Asn132 are each glycosylated (N-linked (GlcNAc...) asparagine).

In terms of tissue distribution, expressed in fetal liver and bone marrow. Expressed in peripheral blood lymphocyte B cells.

It localises to the secreted. In terms of biological role, probable B cell-associated cytokine that plays a role in the regulation of humoral immune responses. Involved in lymphocyte B cell development and immunoglobulin/IgA production. The sequence is that of Protein IL-40 from Homo sapiens (Human).